The chain runs to 79 residues: uncharacterized protein (79 aa).

Residues 1 to 18 (MQIKNIVAVLATVTAINA) form the signal peptide. The disordered stretch occupies residues 24-44 (PNATTPNATQPNATQPNTTLP). 4 N-linked (GlcNAc...) asparagine glycosylation sites follow: Asn-25, Asn-30, Asn-35, and Asn-40. Gly-55 is lipidated: GPI-anchor amidated glycine. Positions 56–79 (EAVVNTMAAGAFGAAIAAGVAFLF) are cleaved as a propeptide — removed in mature form.

The protein resides in the cell membrane. This is an uncharacterized protein from Saccharomyces cerevisiae (strain ATCC 204508 / S288c) (Baker's yeast).